Consider the following 242-residue polypeptide: Ribosomal RNA small subunit methyltransferase G (242 aa).

Residues glycine 78, leucine 83, 130–131, and arginine 151 each bind S-adenosyl-L-methionine; that span reads AE.

The protein belongs to the methyltransferase superfamily. RNA methyltransferase RsmG family.

The protein localises to the cytoplasm. Specifically methylates the N7 position of guanine in position 518 of 16S rRNA. This is Ribosomal RNA small subunit methyltransferase G from Salinispora tropica (strain ATCC BAA-916 / DSM 44818 / JCM 13857 / NBRC 105044 / CNB-440).